The primary structure comprises 276 residues: Octanoyltransferase LipM (276 aa).

In terms of domain architecture, BPL/LPL catalytic spans 32 to 247 (GALPPVIRFY…GFEKGLDIKL (216 aa)). Cysteine 149 serves as the catalytic Acyl-thioester intermediate.

It belongs to the octanoyltransferase LipM family. As to quaternary structure, monomer.

The catalysed reaction is octanoyl-[ACP] + L-lysyl-[protein] = N(6)-octanoyl-L-lysyl-[protein] + holo-[ACP] + H(+). The protein operates within protein modification; protein lipoylation via endogenous pathway; protein N(6)-(lipoyl)lysine from octanoyl-[acyl-carrier-protein]. Functionally, catalyzes the transfer of endogenously produced octanoic acid from octanoyl-acyl-carrier-protein onto the lipoyl domain of GcvH, an intermediate carrier during protein lipoylation. In Macrococcus caseolyticus (strain JCSC5402) (Macrococcoides caseolyticum), this protein is Octanoyltransferase LipM.